Reading from the N-terminus, the 430-residue chain is Glutamyl-tRNA reductase (430 aa).

Substrate contacts are provided by residues 50 to 53 (TCNR), S108, 113 to 115 (EPQ), and Q119. C51 (nucleophile) is an active-site residue. 188–193 (GAGEMA) is an NADP(+) binding site.

The protein belongs to the glutamyl-tRNA reductase family. In terms of assembly, homodimer.

The enzyme catalyses (S)-4-amino-5-oxopentanoate + tRNA(Glu) + NADP(+) = L-glutamyl-tRNA(Glu) + NADPH + H(+). Its pathway is porphyrin-containing compound metabolism; protoporphyrin-IX biosynthesis; 5-aminolevulinate from L-glutamyl-tRNA(Glu): step 1/2. Catalyzes the NADPH-dependent reduction of glutamyl-tRNA(Glu) to glutamate 1-semialdehyde (GSA). This chain is Glutamyl-tRNA reductase, found in Lawsonia intracellularis (strain PHE/MN1-00).